A 558-amino-acid chain; its full sequence is Dihydroxy-acid dehydratase (558 aa).

[2Fe-2S] cluster is bound at residue C50. Residue D82 participates in Mg(2+) binding. C123 is a binding site for [2Fe-2S] cluster. Positions 124 and 125 each coordinate Mg(2+). N6-carboxylysine is present on K125. C195 is a [2Fe-2S] cluster binding site. E447 lines the Mg(2+) pocket. Catalysis depends on S472, which acts as the Proton acceptor.

It belongs to the IlvD/Edd family. Homodimer. [2Fe-2S] cluster is required as a cofactor. It depends on Mg(2+) as a cofactor.

It carries out the reaction (2R)-2,3-dihydroxy-3-methylbutanoate = 3-methyl-2-oxobutanoate + H2O. The catalysed reaction is (2R,3R)-2,3-dihydroxy-3-methylpentanoate = (S)-3-methyl-2-oxopentanoate + H2O. It functions in the pathway amino-acid biosynthesis; L-isoleucine biosynthesis; L-isoleucine from 2-oxobutanoate: step 3/4. Its pathway is amino-acid biosynthesis; L-valine biosynthesis; L-valine from pyruvate: step 3/4. Functionally, functions in the biosynthesis of branched-chain amino acids. Catalyzes the dehydration of (2R,3R)-2,3-dihydroxy-3-methylpentanoate (2,3-dihydroxy-3-methylvalerate) into 2-oxo-3-methylpentanoate (2-oxo-3-methylvalerate) and of (2R)-2,3-dihydroxy-3-methylbutanoate (2,3-dihydroxyisovalerate) into 2-oxo-3-methylbutanoate (2-oxoisovalerate), the penultimate precursor to L-isoleucine and L-valine, respectively. This is Dihydroxy-acid dehydratase from Saccharolobus islandicus (strain Y.N.15.51 / Yellowstone #2) (Sulfolobus islandicus).